Consider the following 477-residue polypeptide: Ribulose bisphosphate carboxylase large chain (477 aa).

Residues 1-2 constitute a propeptide that is removed on maturation; the sequence is MS. An N-acetylproline modification is found at proline 3. Lysine 14 bears the N6,N6,N6-trimethyllysine mark. Residues asparagine 123 and threonine 173 each contribute to the substrate site. Lysine 175 acts as the Proton acceptor in catalysis. Lysine 177 is a binding site for substrate. Residues lysine 201, aspartate 203, and glutamate 204 each coordinate Mg(2+). An N6-carboxylysine modification is found at lysine 201. Histidine 294 serves as the catalytic Proton acceptor. The substrate site is built by arginine 295, histidine 327, and serine 379.

The protein belongs to the RuBisCO large chain family. Type I subfamily. As to quaternary structure, heterohexadecamer of 8 large chains and 8 small chains; disulfide-linked. The disulfide link is formed within the large subunit homodimers. The cofactor is Mg(2+). Post-translationally, the disulfide bond which can form in the large chain dimeric partners within the hexadecamer appears to be associated with oxidative stress and protein turnover.

It localises to the plastid. Its subcellular location is the chloroplast. The catalysed reaction is 2 (2R)-3-phosphoglycerate + 2 H(+) = D-ribulose 1,5-bisphosphate + CO2 + H2O. It carries out the reaction D-ribulose 1,5-bisphosphate + O2 = 2-phosphoglycolate + (2R)-3-phosphoglycerate + 2 H(+). In terms of biological role, ruBisCO catalyzes two reactions: the carboxylation of D-ribulose 1,5-bisphosphate, the primary event in carbon dioxide fixation, as well as the oxidative fragmentation of the pentose substrate in the photorespiration process. Both reactions occur simultaneously and in competition at the same active site. This is Ribulose bisphosphate carboxylase large chain from Nicotiana debneyi (Debney's tobacco).